Consider the following 345-residue polypeptide: Phosphate acyltransferase (345 aa).

It belongs to the PlsX family. In terms of assembly, homodimer. Probably interacts with PlsY.

Its subcellular location is the cytoplasm. It catalyses the reaction a fatty acyl-[ACP] + phosphate = an acyl phosphate + holo-[ACP]. It participates in lipid metabolism; phospholipid metabolism. Catalyzes the reversible formation of acyl-phosphate (acyl-PO(4)) from acyl-[acyl-carrier-protein] (acyl-ACP). This enzyme utilizes acyl-ACP as fatty acyl donor, but not acyl-CoA. The chain is Phosphate acyltransferase from Wolbachia sp. subsp. Drosophila simulans (strain wRi).